We begin with the raw amino-acid sequence, 89 residues long: Small ribosomal subunit protein uS14 (89 aa).

It belongs to the universal ribosomal protein uS14 family. In terms of assembly, part of the 30S ribosomal subunit. Contacts proteins S3 and S10.

Functionally, binds 16S rRNA, required for the assembly of 30S particles and may also be responsible for determining the conformation of the 16S rRNA at the A site. This Aster yellows witches'-broom phytoplasma (strain AYWB) protein is Small ribosomal subunit protein uS14.